We begin with the raw amino-acid sequence, 214 residues long: Probable nicotinate-nucleotide adenylyltransferase (214 aa).

Belongs to the NadD family.

It catalyses the reaction nicotinate beta-D-ribonucleotide + ATP + H(+) = deamido-NAD(+) + diphosphate. It functions in the pathway cofactor biosynthesis; NAD(+) biosynthesis; deamido-NAD(+) from nicotinate D-ribonucleotide: step 1/1. Functionally, catalyzes the reversible adenylation of nicotinate mononucleotide (NaMN) to nicotinic acid adenine dinucleotide (NaAD). This chain is Probable nicotinate-nucleotide adenylyltransferase, found in Pseudomonas fluorescens (strain ATCC BAA-477 / NRRL B-23932 / Pf-5).